Here is a 300-residue protein sequence, read N- to C-terminus: C-5 sterol desaturase (300 aa).

Helical transmembrane passes span Asp3–Ala23, Ser68–Ala88, Trp91–Ile111, and Ile147–Trp167. The Fatty acid hydroxylase domain occupies Trp94–Ser227.

Belongs to the sterol desaturase family.

Its subcellular location is the cell membrane. The chain is C-5 sterol desaturase (erg3) from Mycobacterium bovis (strain ATCC BAA-935 / AF2122/97).